The primary structure comprises 249 residues: Probable phosphoglycerate mutase (249 aa).

Substrate is bound by residues 9–16 (RHGESTWN), 22–23 (TG), Arg61, 88–91 (ERMY), Lys99, 115–116 (RR), and 184–185 (GN). His10 functions as the Tele-phosphohistidine intermediate in the catalytic mechanism. Glu88 serves as the catalytic Proton donor/acceptor.

The protein belongs to the phosphoglycerate mutase family. BPG-dependent PGAM subfamily. Homodimer.

The enzyme catalyses (2R)-2-phosphoglycerate = (2R)-3-phosphoglycerate. The catalysed reaction is (2R)-3-phospho-glyceroyl phosphate = (2R)-2,3-bisphosphoglycerate + H(+). Catalyzes the interconversion of 2-phosphoglycerate and 3-phosphoglycerate. This is Probable phosphoglycerate mutase (gpmA) from Dictyostelium discoideum (Social amoeba).